The primary structure comprises 278 residues: Digeranylgeranylglyceryl phosphate synthase (278 aa).

The next 7 helical transmembrane spans lie at 12–32 (LKNC…ASNF), 34–54 (FGAL…CGFG), 92–112 (IMIF…MAVL), 129–149 (IIGN…GGIA), 199–219 (IYIS…PYLT), 221–241 (IFGI…LAGF), and 257–277 (SKNI…GSIF).

It belongs to the UbiA prenyltransferase family. DGGGP synthase subfamily. Mg(2+) serves as cofactor.

Its subcellular location is the cell membrane. The enzyme catalyses sn-3-O-(geranylgeranyl)glycerol 1-phosphate + (2E,6E,10E)-geranylgeranyl diphosphate = 2,3-bis-O-(geranylgeranyl)-sn-glycerol 1-phosphate + diphosphate. Its pathway is membrane lipid metabolism; glycerophospholipid metabolism. Its function is as follows. Prenyltransferase that catalyzes the transfer of the geranylgeranyl moiety of geranylgeranyl diphosphate (GGPP) to the C2 hydroxyl of (S)-3-O-geranylgeranylglyceryl phosphate (GGGP). This reaction is the second ether-bond-formation step in the biosynthesis of archaeal membrane lipids. This Methanococcus vannielii (strain ATCC 35089 / DSM 1224 / JCM 13029 / OCM 148 / SB) protein is Digeranylgeranylglyceryl phosphate synthase.